The following is a 177-amino-acid chain: LOB domain-containing protein 33 (177 aa).

The region spanning 6 to 108 (SSCGACKFLR…EEIEFLGSQM (103 aa)) is the LOB domain.

It belongs to the LOB domain-containing protein family. As to expression, expressed in roots.

The chain is LOB domain-containing protein 33 (LBD33) from Arabidopsis thaliana (Mouse-ear cress).